A 226-amino-acid chain; its full sequence is UPF0173 metal-dependent hydrolase SRU_1937 (226 aa).

The protein belongs to the UPF0173 family.

The chain is UPF0173 metal-dependent hydrolase SRU_1937 from Salinibacter ruber (strain DSM 13855 / M31).